The chain runs to 469 residues: Glutamate--tRNA ligase 1 (469 aa).

The short motif at proline 11–glycine 21 is the 'HIGH' region element. A 'KMSKS' region motif is present at residues lysine 238–arginine 242. Lysine 241 is an ATP binding site.

The protein belongs to the class-I aminoacyl-tRNA synthetase family. Glutamate--tRNA ligase type 1 subfamily. Monomer.

The protein resides in the cytoplasm. It catalyses the reaction tRNA(Glu) + L-glutamate + ATP = L-glutamyl-tRNA(Glu) + AMP + diphosphate. Its function is as follows. Catalyzes the attachment of glutamate to tRNA(Glu) in a two-step reaction: glutamate is first activated by ATP to form Glu-AMP and then transferred to the acceptor end of tRNA(Glu). This is Glutamate--tRNA ligase 1 from Ehrlichia canis (strain Jake).